The chain runs to 259 residues: Enolase-phosphatase E1 (259 aa).

Mg(2+) is bound by residues Asp16 and Glu18. Residues 151–152 (SS) and Lys185 each bind substrate. A Mg(2+)-binding site is contributed by Asp210.

This sequence belongs to the HAD-like hydrolase superfamily. MasA/MtnC family. As to quaternary structure, monomer. Requires Mg(2+) as cofactor.

It localises to the cytoplasm. The protein resides in the nucleus. It carries out the reaction 5-methylsulfanyl-2,3-dioxopentyl phosphate + H2O = 1,2-dihydroxy-5-(methylsulfanyl)pent-1-en-3-one + phosphate. Its pathway is amino-acid biosynthesis; L-methionine biosynthesis via salvage pathway; L-methionine from S-methyl-5-thio-alpha-D-ribose 1-phosphate: step 3/6. It functions in the pathway amino-acid biosynthesis; L-methionine biosynthesis via salvage pathway; L-methionine from S-methyl-5-thio-alpha-D-ribose 1-phosphate: step 4/6. Bifunctional enzyme that catalyzes the enolization of 2,3-diketo-5-methylthiopentyl-1-phosphate (DK-MTP-1-P) into the intermediate 2-hydroxy-3-keto-5-methylthiopentenyl-1-phosphate (HK-MTPenyl-1-P), which is then dephosphorylated to form the acireductone 1,2-dihydroxy-3-keto-5-methylthiopentene (DHK-MTPene). In Xenopus tropicalis (Western clawed frog), this protein is Enolase-phosphatase E1 (enoph1).